The following is a 404-amino-acid chain: Phosphopentomutase (404 aa).

D10, D303, H308, D344, H345, and H356 together coordinate Mn(2+).

Belongs to the phosphopentomutase family. Requires Mn(2+) as cofactor.

It is found in the cytoplasm. It carries out the reaction 2-deoxy-alpha-D-ribose 1-phosphate = 2-deoxy-D-ribose 5-phosphate. It catalyses the reaction alpha-D-ribose 1-phosphate = D-ribose 5-phosphate. Its pathway is carbohydrate degradation; 2-deoxy-D-ribose 1-phosphate degradation; D-glyceraldehyde 3-phosphate and acetaldehyde from 2-deoxy-alpha-D-ribose 1-phosphate: step 1/2. Functionally, isomerase that catalyzes the conversion of deoxy-ribose 1-phosphate (dRib-1-P) and ribose 1-phosphate (Rib-1-P) to deoxy-ribose 5-phosphate (dRib-5-P) and ribose 5-phosphate (Rib-5-P), respectively. The chain is Phosphopentomutase from Shewanella baltica (strain OS185).